The sequence spans 166 residues: 3-hydroxyacyl-[acyl-carrier-protein] dehydratase FabZ (166 aa).

Histidine 72 is an active-site residue.

Belongs to the thioester dehydratase family. FabZ subfamily.

The protein localises to the cytoplasm. The enzyme catalyses a (3R)-hydroxyacyl-[ACP] = a (2E)-enoyl-[ACP] + H2O. Its function is as follows. Involved in unsaturated fatty acids biosynthesis. Catalyzes the dehydration of short chain beta-hydroxyacyl-ACPs and long chain saturated and unsaturated beta-hydroxyacyl-ACPs. The polypeptide is 3-hydroxyacyl-[acyl-carrier-protein] dehydratase FabZ (Synechococcus sp. (strain JA-2-3B'a(2-13)) (Cyanobacteria bacterium Yellowstone B-Prime)).